Reading from the N-terminus, the 370-residue chain is Protein FAM110B (370 aa).

2 disordered regions span residues 127–151 (SSEG…RSEA) and 237–256 (KSPE…RPSL). Phosphoserine occurs at positions 238 and 301. Residues 317 to 337 (DCEQSQDSNSDLRNDDSANDR) form a disordered region. Basic and acidic residues predominate over residues 326-335 (SDLRNDDSAN).

It belongs to the FAM110 family.

It localises to the cytoplasm. It is found in the cytoskeleton. The protein resides in the microtubule organizing center. The protein localises to the centrosome. The chain is Protein FAM110B (FAM110B) from Pongo abelii (Sumatran orangutan).